The primary structure comprises 138 residues: Urease subunit beta (138 aa).

Positions Arg115–Gln138 are disordered. The span at Ala128–Gln138 shows a compositional bias: acidic residues.

Belongs to the urease beta subunit family. In terms of assembly, heterotrimer of UreA (gamma), UreB (beta) and UreC (alpha) subunits. Three heterotrimers associate to form the active enzyme.

It localises to the cytoplasm. It carries out the reaction urea + 2 H2O + H(+) = hydrogencarbonate + 2 NH4(+). It participates in nitrogen metabolism; urea degradation; CO(2) and NH(3) from urea (urease route): step 1/1. This is Urease subunit beta from Haloarcula marismortui (strain ATCC 43049 / DSM 3752 / JCM 8966 / VKM B-1809) (Halobacterium marismortui).